The primary structure comprises 401 residues: Acetate kinase (401 aa).

N7 contacts Mg(2+). ATP is bound at residue K14. R91 is a substrate binding site. Residue D148 is the Proton donor/acceptor of the active site. ATP is bound by residues 208–212 (HLGNG), 283–285 (DFR), and 332–336 (GVGEN). E385 contributes to the Mg(2+) binding site.

This sequence belongs to the acetokinase family. In terms of assembly, homodimer. Mg(2+) is required as a cofactor. It depends on Mn(2+) as a cofactor.

It localises to the cytoplasm. The catalysed reaction is acetate + ATP = acetyl phosphate + ADP. It functions in the pathway metabolic intermediate biosynthesis; acetyl-CoA biosynthesis; acetyl-CoA from acetate: step 1/2. Catalyzes the formation of acetyl phosphate from acetate and ATP. Can also catalyze the reverse reaction. The polypeptide is Acetate kinase (Caldanaerobacter subterraneus subsp. tengcongensis (strain DSM 15242 / JCM 11007 / NBRC 100824 / MB4) (Thermoanaerobacter tengcongensis)).